A 211-amino-acid polypeptide reads, in one-letter code: MTRVALTSAVNLAKKLQEAGIRHPAVLKAISRTPRELFLDNALAHKAYENTALPIGQGQTISQPYIVARMTELLLQHQPQKVLEVGTGSGYQAAILAQLVPELCTIERIKGLQIQARQRLKRLDLHNVSFKYGDGWQGWPNRSPFDGIMVTAAAAKVPEALLSQLAEGGVLIIPVGEETQQLMRFTRRSDRFSSEVIETVKFVPLINGELA.

The active site involves S62.

It belongs to the methyltransferase superfamily. L-isoaspartyl/D-aspartyl protein methyltransferase family.

Its subcellular location is the cytoplasm. It catalyses the reaction [protein]-L-isoaspartate + S-adenosyl-L-methionine = [protein]-L-isoaspartate alpha-methyl ester + S-adenosyl-L-homocysteine. Catalyzes the methyl esterification of L-isoaspartyl residues in peptides and proteins that result from spontaneous decomposition of normal L-aspartyl and L-asparaginyl residues. It plays a role in the repair and/or degradation of damaged proteins. The polypeptide is Protein-L-isoaspartate O-methyltransferase (Shewanella sp. (strain ANA-3)).